Reading from the N-terminus, the 231-residue chain is NAD(+) ADP-ribosyltransferase (231 aa).

The enzyme catalyses NAD(+) + (ADP-D-ribosyl)n-acceptor = nicotinamide + (ADP-D-ribosyl)n+1-acceptor + H(+).. Activity increases up to 5-6 times with Mg(2+) at 50 uM or higher ion concentration. 3-aminobenzamide (3-ABA) inhibits the activity by up to half and nicotinamide to a lesser extent. Zn(2+) inhibits the activity to half-maximal rate but at 500 uM concentration of the ion. In terms of biological role, catalyzes auto- and hetero-ADP ribosylation and produces short oligomers by elongating the ADP-ribose chain (up to 6-mer). Binds DNA non-specifically but with high affinity. Forms very stable complexes with circular DNA wherein the circular DNA confers thermostability compared to linear DNA. In Saccharolobus solfataricus (Sulfolobus solfataricus), this protein is NAD(+) ADP-ribosyltransferase.